The following is a 164-amino-acid chain: UPF0178 protein RPD_2254 (164 aa).

Belongs to the UPF0178 family.

This Rhodopseudomonas palustris (strain BisB5) protein is UPF0178 protein RPD_2254.